Here is a 503-residue protein sequence, read N- to C-terminus: ATP synthase subunit beta (503 aa).

An ATP-binding site is contributed by 157–164 (GGAGVGKT).

The protein belongs to the ATPase alpha/beta chains family. In terms of assembly, F-type ATPases have 2 components, CF(1) - the catalytic core - and CF(0) - the membrane proton channel. CF(1) has five subunits: alpha(3), beta(3), gamma(1), delta(1), epsilon(1). CF(0) has three main subunits: a(1), b(2) and c(9-12). The alpha and beta chains form an alternating ring which encloses part of the gamma chain. CF(1) is attached to CF(0) by a central stalk formed by the gamma and epsilon chains, while a peripheral stalk is formed by the delta and b chains.

The protein resides in the cell inner membrane. It catalyses the reaction ATP + H2O + 4 H(+)(in) = ADP + phosphate + 5 H(+)(out). Produces ATP from ADP in the presence of a proton gradient across the membrane. The catalytic sites are hosted primarily by the beta subunits. In Flavobacterium psychrophilum (strain ATCC 49511 / DSM 21280 / CIP 103535 / JIP02/86), this protein is ATP synthase subunit beta.